Here is a 26-residue protein sequence, read N- to C-terminus: Turripeptide OL57 (26 aa).

In terms of processing, contains 2 disulfide bonds. As to expression, expressed by the venom duct.

It is found in the secreted. In terms of biological role, acts as a neurotoxin by inhibiting an ion channel. In Iotyrris olangoensis (Sea snail), this protein is Turripeptide OL57.